Reading from the N-terminus, the 406-residue chain is HEAT repeat-containing taxis protein OE_2401F (406 aa).

7 HEAT repeats span residues 7-41 (LERS…NLDE), 42-78 (PEPE…VDAL), 90-127 (GATW…EDTA), 153-184 (IEQP…LGRL), 185-215 (TTEQ…LGRF), 216-252 (ETAE…NVPP), and 370-406 (VGGD…GGKT).

Interacts with chemotaxis (Che) proteins.

Its function is as follows. Involved in taxis signal transduction. Essential for the ability to control the direction of flagellar rotation. May have a role between CheY and the flagellum. In Halobacterium salinarum (strain ATCC 29341 / DSM 671 / R1), this protein is HEAT repeat-containing taxis protein OE_2401F.